The chain runs to 439 residues: Ornithine aminotransferase, mitochondrial (439 aa).

A mitochondrion-targeting transit peptide spans 1 to 35; the sequence is MLSKLASLQTVAALRRGLRTSVASATSVATKKTEQ. An N6-acetyllysine mark is found at lysine 49 and lysine 66. Lysine 102 carries the N6-succinyllysine modification. Lysine 107 bears the N6-acetyllysine; alternate mark. The residue at position 107 (lysine 107) is an N6-succinyllysine; alternate. Lysine 292 bears the N6-(pyridoxal phosphate)lysine mark. An N6-acetyllysine; alternate modification is found at lysine 362. Lysine 362 carries the N6-succinyllysine; alternate modification. Lysine 386 and lysine 392 each carry N6-acetyllysine. N6-acetyllysine; alternate is present on lysine 405. Lysine 405 bears the N6-succinyllysine; alternate mark. Residue lysine 421 is modified to N6-acetyllysine.

Homohexamer. It depends on pyridoxal 5'-phosphate as a cofactor. As to expression, expressed in the head and flagellum of epididymal sperm but not in testicular sperm (at protein level).

The protein resides in the mitochondrion matrix. The enzyme catalyses L-ornithine + 2-oxoglutarate = L-glutamate 5-semialdehyde + L-glutamate. It participates in amino-acid biosynthesis; L-proline biosynthesis; L-glutamate 5-semialdehyde from L-ornithine: step 1/1. Functionally, catalyzes the reversible interconversion of L-ornithine and 2-oxoglutarate to L-glutamate semialdehyde and L-glutamate. The protein is Ornithine aminotransferase, mitochondrial (Oat) of Rattus norvegicus (Rat).